The chain runs to 148 residues: Large ribosomal subunit protein bL9 (148 aa).

This sequence belongs to the bacterial ribosomal protein bL9 family.

Functionally, binds to the 23S rRNA. This chain is Large ribosomal subunit protein bL9, found in Thermus thermophilus.